We begin with the raw amino-acid sequence, 283 residues long: Elongation factor Ts (283 aa).

Residues 80 to 83 (TDFV) form an involved in Mg(2+) ion dislocation from EF-Tu region.

This sequence belongs to the EF-Ts family.

The protein localises to the cytoplasm. Functionally, associates with the EF-Tu.GDP complex and induces the exchange of GDP to GTP. It remains bound to the aminoacyl-tRNA.EF-Tu.GTP complex up to the GTP hydrolysis stage on the ribosome. The sequence is that of Elongation factor Ts from Shigella boydii serotype 18 (strain CDC 3083-94 / BS512).